A 352-amino-acid chain; its full sequence is MEWAAAATKAASWGMAVAAAAAADDAGPTMLSFAGPSSSSSSPDAAAAAAAAAAAALHDFSVRARPAAAAPATRRARGGSGGGGGGGGGAEACSVDGCRSDLSRCRDYHRRHKVCEAHAKTPVVVVAGQEQRFCQQCSRFHNLAEFDDGKKSCRKRLDGHNRRRRKPQHDALNPRSFLPYHQANQFSVYPQTFPIADQNADALMRPLDRHPPFSISFSGTFREPKQFPFMQDGGSGLGAARHDLLRPFSSPEDGANITTTRSACNGVPHGLDPECALSLLSSSLHPSPAAGISSATAPPQFAPSSFSRIAASSQAVTTAFASDGGSVAGDHVLVPAVTYEDPSQAMPFSWQV.

Residues 68–88 form a disordered region; it reads AAAPATRRARGGSGGGGGGGG. Gly residues predominate over residues 78 to 88; it reads GGSGGGGGGGG. The SBP-type zinc-finger motif lies at 90-167; it reads AEACSVDGCR…DGHNRRRRKP (78 aa). 8 residues coordinate Zn(2+): Cys-93, Cys-98, Cys-115, His-118, Cys-134, Cys-137, His-141, and Cys-153. Positions 150–166 match the Bipartite nuclear localization signal motif; the sequence is KKSCRKRLDGHNRRRRK. The tract at residues 152–174 is disordered; it reads SCRKRLDGHNRRRRKPQHDALNP.

The protein resides in the nucleus. In terms of biological role, trans-acting factor that binds specifically to the consensus nucleotide sequence 5'-TNCGTACAA-3'. This is Putative squamosa promoter-binding-like protein 19 (SPL19) from Oryza sativa subsp. japonica (Rice).